The following is a 345-amino-acid chain: Krueppel-like factor 3 (345 aa).

Residues M1 to S74 are repressor domain. Residue K10 forms a Glycyl lysine isopeptide (Lys-Gly) (interchain with G-Cter in SUMO) linkage. A 9aaTAD; inactive motif is present at residues E60–K68. The CTBP-binding motif motif lies at P61–T65. The interval V66–P112 is disordered. Residue K68 forms a Glycyl lysine isopeptide (Lys-Gly) (interchain with G-Cter in SUMO2) linkage. Low complexity-rich tracts occupy residues S70–S81 and S92–S108. 5 positions are modified to phosphoserine: S71, S92, S101, S108, and S111. Glycyl lysine isopeptide (Lys-Gly) (interchain with G-Cter in SUMO2) cross-links involve residues K196 and K198. Phosphoserine is present on residues S216, S224, and S250. C2H2-type zinc fingers lie at residues H260–H284, Y290–H314, and F320–H342.

It belongs to the krueppel C2H2-type zinc-finger protein family. Monomer. In terms of processing, sumoylated with SUMO1. Sumoylation is enhanced by PIAS1, PIAS2alpha and PIAS2beta, and PIAS4, but not by Pc2. Enhances transcriptional repression, but has no effect on DNA binding. Sumoylation on Lys-198 is the major site.

It is found in the nucleus. Binds to the CACCC box of erythroid cell-expressed genes. May play a role in hematopoiesis. In Homo sapiens (Human), this protein is Krueppel-like factor 3 (KLF3).